We begin with the raw amino-acid sequence, 369 residues long: MVNMEICAMDCCVFKGLLAERAHKCLILDCRSFFAFSSSSIIGSSNVRLSTIVKRRAKGSMGLEHIIPNEEQRGRLVAGMYEAVVLLDERTSELDMLRKDSTMMLAVNALSRDPRGSRIYFLKGGYETFSSQCPEFCNKNSPPVALSLPLSPNNVPGSADSNCTPCGTPLYDQGGPVEILPFLYLGSAYHASRKDMLEALGITALINVSANCPNHFEGHFQYKSIPVEDSHKADISSWFNEAIDFIDSIKTCGGRVFVHCQAGISRSATICLAYLMRTNRVKLDEAFEFVKQRRSIISPNFSFMGQLLQFESQVLAPSCSAEAGSPTISVLDRGTSTTTVFNFPVSIPVHSGANSLSYLQNPITTSPSC.

Residues 21-138 form the Rhodanese domain; that stretch reads RAHKCLILDC…FSSQCPEFCN (118 aa). Thr168 carries the post-translational modification Phosphothreonine; by MAPK1. One can recognise a Tyrosine-protein phosphatase domain in the interval 175 to 316; it reads GPVEILPFLY…LLQFESQVLA (142 aa). Residue Cys260 is the Phosphocysteine intermediate of the active site.

Belongs to the protein-tyrosine phosphatase family. Non-receptor class dual specificity subfamily. Post-translationally, phosphorylated by MAPK1/ERK2 at Thr-168 and at one or more serine residues in a progesterone-dependent manner. Phosphorylation reduces its rate of degradation but does not seem to affect phosphatase activity.

The protein resides in the nucleus. It catalyses the reaction O-phospho-L-seryl-[protein] + H2O = L-seryl-[protein] + phosphate. The catalysed reaction is O-phospho-L-threonyl-[protein] + H2O = L-threonyl-[protein] + phosphate. It carries out the reaction O-phospho-L-tyrosyl-[protein] + H2O = L-tyrosyl-[protein] + phosphate. Functionally, dual specificity phosphatase that dephosphorylates MAP kinase MAPK1/ERK2 on both 'Thr-188' and 'Tyr-190', regulating its activity during the meiotic cell cycle. The chain is Dual specificity protein phosphatase 1-B from Xenopus laevis (African clawed frog).